A 310-amino-acid chain; its full sequence is Aspartate carbamoyltransferase catalytic subunit (310 aa).

Carbamoyl phosphate contacts are provided by R58 and T59. K86 provides a ligand contact to L-aspartate. Carbamoyl phosphate is bound by residues R108, H137, and Q140. The L-aspartate site is built by R170 and R225. Residues G264 and P265 each coordinate carbamoyl phosphate.

The protein belongs to the aspartate/ornithine carbamoyltransferase superfamily. ATCase family. As to quaternary structure, heterododecamer (2C3:3R2) of six catalytic PyrB chains organized as two trimers (C3), and six regulatory PyrI chains organized as three dimers (R2).

It catalyses the reaction carbamoyl phosphate + L-aspartate = N-carbamoyl-L-aspartate + phosphate + H(+). It functions in the pathway pyrimidine metabolism; UMP biosynthesis via de novo pathway; (S)-dihydroorotate from bicarbonate: step 2/3. In terms of biological role, catalyzes the condensation of carbamoyl phosphate and aspartate to form carbamoyl aspartate and inorganic phosphate, the committed step in the de novo pyrimidine nucleotide biosynthesis pathway. The chain is Aspartate carbamoyltransferase catalytic subunit from Coxiella burnetii (strain CbuG_Q212) (Coxiella burnetii (strain Q212)).